Reading from the N-terminus, the 413-residue chain is Falstatin (413 aa).

The signal sequence occupies residues 1–21 (MNLLVFFCFFLLSCIVHLSRC). The BC loop; binds and inhibits the active site cavity of cysteine proteases signature appears at 284–294 (LDSVNGNGFVW). 2 stretches are compositionally biased toward polar residues: residues 325–339 (ISVTNPVPIPKNSNT) and 346–360 (NNKQDGSQNNTTTNH). The segment at 325–367 (ISVTNPVPIPKNSNTNKDDSINNKQDGSQNNTTTNHFPKPREQ) is disordered.

This sequence belongs to the protease inhibitor I71 family. Oligomer; probably composed of 10 monomers. Proteolytically cleaved.

The protein resides in the secreted. It is found in the cytoplasmic vesicle. It localises to the secretory vesicle. Its subcellular location is the microneme. The protein localises to the parasitophorous vacuole lumen. The protein resides in the host cytoplasm. Functionally, cysteine protease inhibitor. Inhibits cysteine protease falcipains FP2 and FP3. Required for the invasion of host erythrocytes by merozoites. In the mosquito vector, essential for the gliding motility of hemocoel sporozoites and, therefore, for salivary gland invasion and the subsequent transmission from the mosquito to the mammalian host. Required for the invasion of host hepatocytes. During the liver stage, may prevent host hepatocyte cell death likely by inhibiting host cysteine proteases. In Plasmodium falciparum (isolate 3D7), this protein is Falstatin.